Consider the following 372-residue polypeptide: Ligninase LG3 (372 aa).

The signal sequence occupies residues 1–21 (MAFKQLFAAISLALSLSAANA). The propeptide occupies 22–28 (AAVIEKR). 2 cysteine pairs are disulfide-bonded: Cys-31–Cys-43 and Cys-62–Cys-148. The Proton acceptor role is filled by His-75. Ca(2+)-binding residues include Asp-76, Gly-94, Asp-96, and Ser-98. Residue His-204 coordinates heme b. Residues Ser-205, Asp-222, Thr-224, Ile-227, and Asp-229 each contribute to the Ca(2+) site. Residues Cys-277 and Cys-345 are joined by a disulfide bond. Residue Asn-285 is glycosylated (N-linked (GlcNAc...) asparagine). The segment covering 350-361 (FPTLTTLPGPET) has biased composition (low complexity). Positions 350–372 (FPTLTTLPGPETSVQRIPPPPGA) are disordered.

It belongs to the peroxidase family. Ligninase subfamily. Requires heme b as cofactor. Ca(2+) serves as cofactor.

It catalyses the reaction 1-(3,4-dimethoxyphenyl)-2-(2-methoxyphenoxy)propane-1,3-diol + H2O2 = 3,4-dimethoxybenzaldehyde + guaiacol + glycolaldehyde + H2O. The catalysed reaction is 2 (3,4-dimethoxyphenyl)methanol + H2O2 = 2 (3,4-dimethoxyphenyl)methanol radical + 2 H2O. The protein operates within secondary metabolite metabolism; lignin degradation. Its function is as follows. Depolymerization of lignin. Catalyzes the C(alpha)-C(beta) cleavage of the propyl side chains of lignin. The protein is Ligninase LG3 (GLG3) of Phanerodontia chrysosporium (White-rot fungus).